The sequence spans 180 residues: Crossover junction endodeoxyribonuclease RuvC (180 aa).

Catalysis depends on residues Asp-7, Glu-66, and Asp-138. 3 residues coordinate Mg(2+): Asp-7, Glu-66, and Asp-138.

This sequence belongs to the RuvC family. In terms of assembly, homodimer which binds Holliday junction (HJ) DNA. The HJ becomes 2-fold symmetrical on binding to RuvC with unstacked arms; it has a different conformation from HJ DNA in complex with RuvA. In the full resolvosome a probable DNA-RuvA(4)-RuvB(12)-RuvC(2) complex forms which resolves the HJ. The cofactor is Mg(2+).

The protein resides in the cytoplasm. It catalyses the reaction Endonucleolytic cleavage at a junction such as a reciprocal single-stranded crossover between two homologous DNA duplexes (Holliday junction).. The RuvA-RuvB-RuvC complex processes Holliday junction (HJ) DNA during genetic recombination and DNA repair. Endonuclease that resolves HJ intermediates. Cleaves cruciform DNA by making single-stranded nicks across the HJ at symmetrical positions within the homologous arms, yielding a 5'-phosphate and a 3'-hydroxyl group; requires a central core of homology in the junction. The consensus cleavage sequence is 5'-(A/T)TT(C/G)-3'. Cleavage occurs on the 3'-side of the TT dinucleotide at the point of strand exchange. HJ branch migration catalyzed by RuvA-RuvB allows RuvC to scan DNA until it finds its consensus sequence, where it cleaves and resolves the cruciform DNA. The chain is Crossover junction endodeoxyribonuclease RuvC from Burkholderia orbicola (strain MC0-3).